Reading from the N-terminus, the 202-residue chain is Large ribosomal subunit protein uL13 (202 aa).

It belongs to the universal ribosomal protein uL13 family.

The sequence is that of Large ribosomal subunit protein uL13 from Caenorhabditis elegans.